Reading from the N-terminus, the 460-residue chain is Ribosome biogenesis protein YTM1 (460 aa).

Positions 8-89 (VKIRFFTREK…EASLNVEYTR (82 aa)) are ubiquitin-like (UBL) domain. The sufficient for interaction with ERB1 and association with 66S pre-ribosomes stretch occupies residues 99-460 (SFSNEDWVSS…INKGDNIFKN (362 aa)). 7 WD repeats span residues 101–140 (SNEDWVSSLDVGDGSKHIISGSYDGIVRTWDLSGNVQKQY), 142–180 (GHSGPIRAVKYISNTRLVSAGNDRTLRLWKTKNDDLKLT), 206–244 (GHKAPVVSIDVSDNSRILSASYDNSIGFWSTIYKEMTVV), 285–325 (SHTA…CIDT), 327–366 (TTSYSLLSIAQLSTLNLLACGSSARHITLHDPRVGASSKV), 373–413 (GHKN…PMYT), and 424–460 (GVNDKVFAVKWAEKVGIISAGQDKKIQINKGDNIFKN).

This sequence belongs to the WD repeat WDR12/YTM1 family. As to quaternary structure, component of the NOP7 complex, composed of ERB1, NOP7 and YTM1. The complex is held together by ERB1, which interacts with NOP7 via its N-terminal domain and with YTM1 via a high-affinity interaction between the seven-bladed beta-propeller domains of the 2 proteins. The NOP7 complex associates with the 66S pre-ribosome. Interacts (via UBL domain) with MDN1 (via VWFA/MIDAS domain).

The protein localises to the nucleus. It localises to the nucleolus. The protein resides in the nucleoplasm. In terms of biological role, component of the NOP7 complex, which is required for maturation of the 25S and 5.8S ribosomal RNAs and formation of the 60S ribosome. In Saccharomyces cerevisiae (strain YJM789) (Baker's yeast), this protein is Ribosome biogenesis protein YTM1.